The sequence spans 352 residues: tRNA N6-adenosine threonylcarbamoyltransferase (352 aa).

H114, H118, and Y135 together coordinate a divalent metal cation. Residues 135–139 (YVSGG), D167, G182, E186, and N283 each bind substrate. A divalent metal cation is bound at residue D311.

This sequence belongs to the KAE1 / TsaD family. Component of the EKC/KEOPS complex composed of at least BUD32, CGI121, GON7, KAE1 and PCC1; the whole complex dimerizes. A divalent metal cation is required as a cofactor.

The protein localises to the cytoplasm. Its subcellular location is the nucleus. The catalysed reaction is L-threonylcarbamoyladenylate + adenosine(37) in tRNA = N(6)-L-threonylcarbamoyladenosine(37) in tRNA + AMP + H(+). Functionally, component of the EKC/KEOPS complex that is required for the formation of a threonylcarbamoyl group on adenosine at position 37 (t(6)A37) in tRNAs that read codons beginning with adenine. The complex is probably involved in the transfer of the threonylcarbamoyl moiety of threonylcarbamoyl-AMP (TC-AMP) to the N6 group of A37. KAE1 likely plays a direct catalytic role in this reaction, but requires other protein(s) of the complex to fulfill this activity. The EKC/KEOPS complex also promotes both telomere uncapping and telomere elongation. The complex is required for efficient recruitment of transcriptional coactivators. The sequence is that of tRNA N6-adenosine threonylcarbamoyltransferase from Phaeosphaeria nodorum (strain SN15 / ATCC MYA-4574 / FGSC 10173) (Glume blotch fungus).